A 499-amino-acid polypeptide reads, in one-letter code: Ammonium transporter MEP2 (499 aa).

The Extracellular segment spans residues 1-31; the sequence is MSYNFTGTPTGEGTGGNSLTTDLNTQFDLAN. N-linked (GlcNAc...) asparagine glycosylation occurs at asparagine 4. The helical transmembrane segment at 32–52 threads the bilayer; it reads MGWIGVASAGVWIMVPGIGLL. Topologically, residues 53-62 are cytoplasmic; it reads YSGLSRKKHA. Residues 63–83 traverse the membrane as a helical segment; it reads LSLLWASMMASAVCIFQWFFW. The Extracellular segment spans residues 84 to 122; the sequence is GYSLAFSHNTRGNGFIGTLEFFGFRNVLGAPSSVSSLPD. A helical transmembrane segment spans residues 123-143; that stretch reads ILFAVYQGMFAAVTGALMLGG. Residues 144–152 lie on the Cytoplasmic side of the membrane; it reads ACERARLFP. Residues 153–173 form a helical membrane-spanning segment; sequence MMVFLFLWMTIVYCPIACWVW. At 174-187 the chain is on the extracellular side; that stretch reads NAEGWLVKLGSLDY. Residues 188 to 208 form a helical membrane-spanning segment; that stretch reads AGGLCVHLTSGHGGLVYALIL. Residues 209–230 lie on the Cytoplasmic side of the membrane; sequence GKRNDPVTRKGMPKYKPHSVTS. The chain crosses the membrane as a helical span at residues 231 to 251; the sequence is VVLGTVFLWFGWMFFNGGSAG. Residues 252 to 257 lie on the Extracellular side of the membrane; sequence NATIRA. Residues 258–278 traverse the membrane as a helical segment; the sequence is WYSIMSTNLAAACGGLTWMVI. The Cytoplasmic portion of the chain corresponds to 279-289; it reads DYFRCGRKWTT. Residues 290 to 312 traverse the membrane as a helical segment; sequence VGLCSGIIAGLVGITPAAGFVPI. Topologically, residues 313-315 are extracellular; the sequence is WSA. The helical transmembrane segment at 316-338 threads the bilayer; it reads VVIGVVTGAGCNLAVDLKSLLRI. The Cytoplasmic segment spans residues 339–346; it reads DDGLDCYS. A helical membrane pass occupies residues 347–367; the sequence is IHGVGGCIGSVLTGIFAADYV. Residues 368-393 are Extracellular-facing; it reads NATAGSYISPIDGGWINHHYKQVGYQ. Residues 394-414 form a helical membrane-spanning segment; it reads LAGICAALAWTVTVTSILLLT. Topologically, residues 415 to 499 are cytoplasmic; sequence MNAIPFLKLR…SSTKNTDHIV (85 aa). Positions 428–441 are enhancer domain; sequence DEEELGTDAAQIGE. Residues 442-449 form a linker domain region; sequence FTYEESTA. Positions 450–485 are autoinhibitory domain; sequence YIPEPIRSKTSAQMPPPHENIDDKIVGNTDAEKNST. The segment at 455–499 is disordered; that stretch reads IRSKTSAQMPPPHENIDDKIVGNTDAEKNSTPSDASSTKNTDHIV. Serine 457 is modified (phosphoserine). The span at 468–482 shows a compositional bias: basic and acidic residues; that stretch reads ENIDDKIVGNTDAEK. A compositionally biased stretch (polar residues) spans 483–493; it reads NSTPSDASSTK.

The protein belongs to the ammonia transporter channel (TC 1.A.11.2) family. Post-translationally, phosphorylated at Ser-457 by the TORC1 effector kinase NPR1 under nitrogen-limiting conditions which causes a conformational change in the C-terminal region (CTR) to form an open active conformation. Supplementation of nitrogen source leads to inactivation and instant Ser-457 dephosphorylation via plasma membrane PSR1 and PSR2 redundant phosphatases. In terms of processing, the residue Asn-4 of the protein's N-terminal tail is the only site that is glycosylated.

The protein resides in the cell membrane. Transporter for ammonium (both charged and uncharged NH3 and NH4) to use as a nitrogen source. The affinity of MEP2 is about twenty times higher than that of MEP1. MEP3 has the lowest affinity. Under ammonium limitation acts as an ammonium sensor, generating a signal that leads to pseudohyphal (filamentous) growth. The chain is Ammonium transporter MEP2 from Saccharomyces cerevisiae (strain ATCC 204508 / S288c) (Baker's yeast).